The chain runs to 865 residues: Protein translocase subunit SecA (865 aa).

ATP is bound by residues Gln85, Gly103 to Thr107, and Asp505. 4 residues coordinate Zn(2+): Cys847, Cys849, Cys858, and His859.

It belongs to the SecA family. As to quaternary structure, monomer and homodimer. Part of the essential Sec protein translocation apparatus which comprises SecA, SecYEG and auxiliary proteins SecDF. Other proteins may also be involved. Zn(2+) is required as a cofactor.

The protein localises to the cell membrane. It localises to the cytoplasm. The catalysed reaction is ATP + H2O + cellular proteinSide 1 = ADP + phosphate + cellular proteinSide 2.. Its function is as follows. Part of the Sec protein translocase complex. Interacts with the SecYEG preprotein conducting channel. Has a central role in coupling the hydrolysis of ATP to the transfer of proteins into and across the cell membrane, serving as an ATP-driven molecular motor driving the stepwise translocation of polypeptide chains across the membrane. This Lactococcus lactis subsp. cremoris (strain MG1363) protein is Protein translocase subunit SecA.